Reading from the N-terminus, the 84-residue chain is Cell division topological specificity factor (84 aa).

It belongs to the MinE family.

Functionally, prevents the cell division inhibition by proteins MinC and MinD at internal division sites while permitting inhibition at polar sites. This ensures cell division at the proper site by restricting the formation of a division septum at the midpoint of the long axis of the cell. This Cupriavidus taiwanensis (strain DSM 17343 / BCRC 17206 / CCUG 44338 / CIP 107171 / LMG 19424 / R1) (Ralstonia taiwanensis (strain LMG 19424)) protein is Cell division topological specificity factor.